We begin with the raw amino-acid sequence, 60 residues long: Large ribosomal subunit protein uL30 (60 aa).

Belongs to the universal ribosomal protein uL30 family. In terms of assembly, part of the 50S ribosomal subunit.

This is Large ribosomal subunit protein uL30 from Agathobacter rectalis (strain ATCC 33656 / DSM 3377 / JCM 17463 / KCTC 5835 / VPI 0990) (Eubacterium rectale).